Reading from the N-terminus, the 379-residue chain is MTVMRKSHPILKIFNNSFIDLPTPSNISAWWNFGSLLGLCLIVQTLTGLFLAMHYTADISLAFSSVAHICRDVQYGWLIRNLHANGASMFFICLYLHIGRGLYYGSYLFKETWNIGVVLLLLVMAAAFVGYVLPWGQMSFWGATVITNLLSAIPYVGATLVEWVWGGFSVDNATLTRFFTFHFLLPFTIIALTMLHLLFLHETGSNNPTGLNSNPDKIPFHPYFSYKDLLGATLMITTLLTLVLFSPNLLGDPENFTPANPLITPPHIKPEWYFLFAYAILRSIPNKLGGVLALLFSILILMIVPLLHLSKQRSTTFRPFSQTLFWLLISNVLILTWIGGQPVEHPFIIIGQLASVTYFTLFLVVMPTTALLENKLLNW.

A run of 4 helical transmembrane segments spans residues 33-53 (FGSLLGLCLIVQTLTGLFLAM), 77-98 (WLIRNLHANGASMFFICLYLHI), 113-133 (WNIGVVLLLLVMAAAFVGYVL), and 178-198 (FFTFHFLLPFTIIALTMLHLL). Residues histidine 83 and histidine 97 each coordinate heme b. Residues histidine 182 and histidine 196 each coordinate heme b. Histidine 201 serves as a coordination point for a ubiquinone. The next 4 helical transmembrane spans lie at 226-246 (YKDLLGATLMITTLLTLVLFS), 288-308 (LGGVLALLFSILILMIVPLLH), 320-340 (FSQTLFWLLISNVLILTWIGG), and 347-367 (FIIIGQLASVTYFTLFLVVMP).

It belongs to the cytochrome b family. In terms of assembly, the cytochrome bc1 complex contains 3 respiratory subunits (MT-CYB, CYC1 and UQCRFS1), 2 core proteins (UQCRC1 and UQCRC2) and probably 6 low-molecular weight proteins. Heme b is required as a cofactor.

The protein resides in the mitochondrion inner membrane. In terms of biological role, component of the ubiquinol-cytochrome c reductase complex (complex III or cytochrome b-c1 complex) that is part of the mitochondrial respiratory chain. The b-c1 complex mediates electron transfer from ubiquinol to cytochrome c. Contributes to the generation of a proton gradient across the mitochondrial membrane that is then used for ATP synthesis. This chain is Cytochrome b (MT-CYB), found in Iguana iguana (Common iguana).